The chain runs to 315 residues: Olfactory receptor 4A8 (315 aa).

Topologically, residues 1–24 (MRQNNNITEFVLLGFSQYPDVQNA) are extracellular. N6 is a glycosylation site (N-linked (GlcNAc...) asparagine). Residues 25 to 45 (LFVMFLLIYIVTMVGNLLIVV) form a helical membrane-spanning segment. Topologically, residues 46-57 (SIIASPFLGSPV) are cytoplasmic. A helical transmembrane segment spans residues 58–80 (YFFLACLSFIDAVYSTTISPVLI). Residues 81 to 95 (VDLLCDKKTISFPAC) are Extracellular-facing. Residues C95 and C177 are joined by a disulfide bond. Residues 96-116 (MGQLFIEHLFGDTDVFLLVVM) form a helical membrane-spanning segment. Residues 117 to 139 (AYDRYVATCKPLRYLTIMNRQVC) are Cytoplasmic-facing. A helical membrane pass occupies residues 140–160 (ILLLVVAVTGGFLHSVFQILV). Residues 161–193 (VYSLPFCGPNVIYHFFCNIYPLLDLECTDTYFV) are Extracellular-facing. The helical transmembrane segment at 194–214 (GLAVVFNGGAICMVIFTLLLI) threads the bilayer. Residues 215 to 235 (SYGVILNSLKTYSPEGRHKAP) lie on the Cytoplasmic side of the membrane. The chain crosses the membrane as a helical span at residues 236–256 (FICSSHFIMVILFFVPCIFLY). Residues 257-266 (VRPVSNFPID) are Extracellular-facing. The chain crosses the membrane as a helical span at residues 267–287 (KFLTVFYSVITPKLNPFIYML). Residues 288 to 315 (RNSEMRNAIENLLGYQSGKTGFRCSKLN) lie on the Cytoplasmic side of the membrane.

The protein belongs to the G-protein coupled receptor 1 family.

It localises to the cell membrane. Functionally, odorant receptor. The sequence is that of Olfactory receptor 4A8 (OR4A8) from Homo sapiens (Human).